The following is a 181-amino-acid chain: Acireductone dioxygenase (181 aa).

Fe(2+) is bound by residues His91, His93, Glu97, and His136. Residues His91, His93, Glu97, and His136 each coordinate Ni(2+).

Belongs to the acireductone dioxygenase (ARD) family. In terms of assembly, monomer. Interacts with MMP14. Fe(2+) is required as a cofactor. The cofactor is Ni(2+).

It is found in the cytoplasm. Its subcellular location is the nucleus. The protein localises to the cell membrane. The catalysed reaction is 1,2-dihydroxy-5-(methylsulfanyl)pent-1-en-3-one + O2 = 4-methylsulfanyl-2-oxobutanoate + formate + 2 H(+). The enzyme catalyses 1,2-dihydroxy-5-(methylsulfanyl)pent-1-en-3-one + O2 = 3-(methylsulfanyl)propanoate + CO + formate + 2 H(+). It participates in amino-acid biosynthesis; L-methionine biosynthesis via salvage pathway; L-methionine from S-methyl-5-thio-alpha-D-ribose 1-phosphate: step 5/6. In terms of biological role, catalyzes 2 different reactions between oxygen and the acireductone 1,2-dihydroxy-3-keto-5-methylthiopentene (DHK-MTPene) depending upon the metal bound in the active site. Fe-containing acireductone dioxygenase (Fe-ARD) produces formate and 2-keto-4-methylthiobutyrate (KMTB), the alpha-ketoacid precursor of methionine in the methionine recycle pathway. Ni-containing acireductone dioxygenase (Ni-ARD) produces methylthiopropionate, carbon monoxide and formate, and does not lie on the methionine recycle pathway. The sequence is that of Acireductone dioxygenase (adi1) from Danio rerio (Zebrafish).